A 518-amino-acid chain; its full sequence is Light-independent protochlorophyllide reductase subunit B (518 aa).

Asp36 lines the [4Fe-4S] cluster pocket. Asp299 (proton donor) is an active-site residue. 434-435 (GM) contacts substrate.

Belongs to the ChlB/BchB/BchZ family. In terms of assembly, protochlorophyllide reductase is composed of three subunits; ChlL, ChlN and ChlB. Forms a heterotetramer of two ChlB and two ChlN subunits. [4Fe-4S] cluster is required as a cofactor.

Its subcellular location is the plastid. It localises to the chloroplast. The enzyme catalyses chlorophyllide a + oxidized 2[4Fe-4S]-[ferredoxin] + 2 ADP + 2 phosphate = protochlorophyllide a + reduced 2[4Fe-4S]-[ferredoxin] + 2 ATP + 2 H2O. Its pathway is porphyrin-containing compound metabolism; chlorophyll biosynthesis (light-independent). Its function is as follows. Component of the dark-operative protochlorophyllide reductase (DPOR) that uses Mg-ATP and reduced ferredoxin to reduce ring D of protochlorophyllide (Pchlide) to form chlorophyllide a (Chlide). This reaction is light-independent. The NB-protein (ChlN-ChlB) is the catalytic component of the complex. In Adiantum capillus-veneris (Maidenhair fern), this protein is Light-independent protochlorophyllide reductase subunit B.